We begin with the raw amino-acid sequence, 519 residues long: Chaperone SurA (519 aa).

A signal peptide spans 1–31 (MMRSLHSLRRMSGTVLALMLAAGLPLSAAQA). 2 stretches are compositionally biased toward low complexity: residues 31-45 (AQPAKPAPKGDQKPA) and 197-207 (PAAAQATRAPA). Disordered stretches follow at residues 31-50 (AQPAKPAPKGDQKPATPAPS) and 196-221 (NPAAAQATRAPAPQQPQPQPRQPAQS). The region spanning 223–324 (PAMLVLAQIL…NGFHILKVVD (102 aa)) is the PpiC 1 domain. The disordered stretch occupies residues 328–361 (GGQPAQAARPAPAPAPQQPSSFQEGPSVAAPQGP). A PpiC 2 domain is found at 364–463 (VTQTHARHIL…FGWHLIQVLE (100 aa)).

It localises to the periplasm. The catalysed reaction is [protein]-peptidylproline (omega=180) = [protein]-peptidylproline (omega=0). Its function is as follows. Chaperone involved in the correct folding and assembly of outer membrane proteins. Recognizes specific patterns of aromatic residues and the orientation of their side chains, which are found more frequently in integral outer membrane proteins. May act in both early periplasmic and late outer membrane-associated steps of protein maturation. This chain is Chaperone SurA, found in Bordetella pertussis (strain Tohama I / ATCC BAA-589 / NCTC 13251).